Reading from the N-terminus, the 628-residue chain is Inactive sodium-dependent neutral amino acid transporter B(0)AT3 (628 aa).

The Cytoplasmic portion of the chain corresponds to methionine 1–glutamine 26. The chain crosses the membrane as a helical span at residues tyrosine 27–leucine 47. Topologically, residues cysteine 48–tyrosine 51 are extracellular. The chain crosses the membrane as a helical span at residues glycine 52–valine 74. Residues glutamate 75–glycine 88 are Cytoplasmic-facing. The helical transmembrane segment at valine 89 to isoleucine 111 threads the bilayer. Over serine 112–serine 178 the chain is Extracellular. N-linked (GlcNAc...) asparagine glycans are attached at residues asparagine 144, asparagine 168, and asparagine 174. The helical transmembrane segment at isoleucine 179–glycine 201 threads the bilayer. At isoleucine 202 to lysine 207 the chain is on the cytoplasmic side. Residues valine 208–leucine 230 traverse the membrane as a helical segment. Over proline 231–valine 253 the chain is Extracellular. A helical transmembrane segment spans residues tryptophan 254–alanine 276. At serine 277–aspartate 288 the chain is on the cytoplasmic side. A helical membrane pass occupies residues alanine 289–leucine 311. At glycine 312 to alanine 399 the chain is on the extracellular side. A glycan (N-linked (GlcNAc...) asparagine) is linked at asparagine 354. A helical membrane pass occupies residues proline 400–valine 422. Residues glutamate 423 to glutamate 442 lie on the Cytoplasmic side of the membrane. Residues alanine 443–asparagine 465 traverse the membrane as a helical segment. At tyrosine 466–phenylalanine 474 the chain is on the extracellular side. A helical transmembrane segment spans residues alanine 475–methionine 497. The Cytoplasmic portion of the chain corresponds to lysine 498–arginine 517. The chain crosses the membrane as a helical span at residues leucine 518–tryptophan 540. Topologically, residues lysine 541 to arginine 568 are extracellular. A helical membrane pass occupies residues alanine 569 to leucine 591. Residues threonine 592 to arginine 628 are Cytoplasmic-facing. The tract at residues aspartate 602–arginine 628 is disordered.

The protein belongs to the sodium:neurotransmitter symporter (SNF) (TC 2.A.22) family. SLC6A18 subfamily. In terms of tissue distribution, abundantly expressed in kidney, but not in intestine.

It is found in the membrane. Its function is as follows. Does not show neutral amino acid transporter activity. The protein is Inactive sodium-dependent neutral amino acid transporter B(0)AT3 of Homo sapiens (Human).